A 755-amino-acid polypeptide reads, in one-letter code: Catalase-peroxidase (755 aa).

A cross-link (tryptophyl-tyrosyl-methioninium (Trp-Tyr) (with M-271)) is located at residues 91-245; sequence WHSAGTYRTA…LAAVQMGLIY (155 aa). Histidine 92 functions as the Proton acceptor in the catalytic mechanism. Positions 193-229 are disordered; that stretch reads DNRYGKDPESMQPPGEGTLVAEPAEHGNEESRTNQGE. Basic and acidic residues predominate over residues 215 to 224; it reads PAEHGNEESR. The segment at residues 245–271 is a cross-link (tryptophyl-tyrosyl-methioninium (Tyr-Met) (with W-91)); the sequence is YVNPEGPEGNPDPVASAKDIRETFGRM. Position 286 (histidine 286) interacts with heme.

This sequence belongs to the peroxidase family. Peroxidase/catalase subfamily. As to quaternary structure, homodimer or homotetramer. The cofactor is heme b. Post-translationally, formation of the three residue Trp-Tyr-Met cross-link is important for the catalase, but not the peroxidase activity of the enzyme.

It catalyses the reaction H2O2 + AH2 = A + 2 H2O. The catalysed reaction is 2 H2O2 = O2 + 2 H2O. Functionally, bifunctional enzyme with both catalase and broad-spectrum peroxidase activity. The chain is Catalase-peroxidase from Pseudomonas fluorescens (strain Pf0-1).